A 538-amino-acid chain; its full sequence is CTP synthase (538 aa).

The amidoligase domain stretch occupies residues 1–267 (MDRAKFIFVT…LTPIARRFNL (267 aa)). Ser-15 lines the CTP pocket. UTP is bound at residue Ser-15. ATP is bound by residues 16 to 21 (SLGKGI) and Asp-73. Mg(2+)-binding residues include Asp-73 and Glu-141. CTP contacts are provided by residues 148–150 (DME), 188–193 (KTKPTQ), and Lys-224. UTP contacts are provided by residues 188–193 (KTKPTQ) and Lys-224. The 247-residue stretch at 292–538 (KIGFVGKYLS…DFIKSALSKS (247 aa)) folds into the Glutamine amidotransferase type-1 domain. Gly-351 serves as a coordination point for L-glutamine. Cys-378 acts as the Nucleophile; for glutamine hydrolysis in catalysis. L-glutamine contacts are provided by residues 379-382 (LGMQ), Glu-402, and Arg-469. Active-site residues include His-513 and Glu-515.

This sequence belongs to the CTP synthase family. Homotetramer.

It catalyses the reaction UTP + L-glutamine + ATP + H2O = CTP + L-glutamate + ADP + phosphate + 2 H(+). The enzyme catalyses L-glutamine + H2O = L-glutamate + NH4(+). The catalysed reaction is UTP + NH4(+) + ATP = CTP + ADP + phosphate + 2 H(+). Its pathway is pyrimidine metabolism; CTP biosynthesis via de novo pathway; CTP from UDP: step 2/2. Its activity is regulated as follows. Allosterically activated by GTP, when glutamine is the substrate; GTP has no effect on the reaction when ammonia is the substrate. The allosteric effector GTP functions by stabilizing the protein conformation that binds the tetrahedral intermediate(s) formed during glutamine hydrolysis. Inhibited by the product CTP, via allosteric rather than competitive inhibition. In terms of biological role, catalyzes the ATP-dependent amination of UTP to CTP with either L-glutamine or ammonia as the source of nitrogen. Regulates intracellular CTP levels through interactions with the four ribonucleotide triphosphates. In Helicobacter pylori (strain HPAG1), this protein is CTP synthase.